The chain runs to 202 residues: Outer-membrane lipoprotein LolB (202 aa).

The N-terminal stretch at 1–18 (MFRRTYFWLMLLPLFMVG) is a signal peptide. The N-palmitoyl cysteine moiety is linked to residue Cys-19. The S-diacylglycerol cysteine moiety is linked to residue Cys-19.

The protein belongs to the LolB family. In terms of assembly, monomer.

It localises to the cell outer membrane. Plays a critical role in the incorporation of lipoproteins in the outer membrane after they are released by the LolA protein. In Vibrio vulnificus (strain YJ016), this protein is Outer-membrane lipoprotein LolB.